The following is a 212-amino-acid chain: ER lumen protein-retaining receptor 2 (212 aa).

Residues 1–4 (MNIF) lie on the Lumenal side of the membrane. A helical transmembrane segment spans residues 5–24 (RLTGDLSHLAAIVILLLKIW). Over 25 to 32 (KTRSCAGI) the chain is Cytoplasmic. Residues 33–52 (SGKSQLLFALVFTTRYLDLF) traverse the membrane as a helical segment. An interaction with the K-D-E-L motif on target proteins region spans residues 47 to 48 (RY). Topologically, residues 53-58 (TSFISL) are lumenal. A helical membrane pass occupies residues 59–79 (YNTSMKVIYLACSYATVYLIY). The Cytoplasmic portion of the chain corresponds to 80–92 (LKFKATYDGNHDT). The chain crosses the membrane as a helical span at residues 93–110 (FRVEFLVVPVGGLSFLVN). Over 111-116 (HDFSPL) the chain is Lumenal. A helical transmembrane segment spans residues 117-135 (EILWTFSIYLESVAILPQL). At 136–149 (FMISKTGEAETITT) the chain is on the cytoplasmic side. The chain crosses the membrane as a helical span at residues 150 to 168 (HYLFFLGLYRALYLVNWIW). Residues 159-169 (RALYLVNWIWR) form an interaction with the K-D-E-L motif on target proteins region. Topologically, residues 169–178 (RFYFEGFFDL) are lumenal. A helical membrane pass occupies residues 179 to 199 (IAVVAGVVQTILYCDFFYLYI). Residues 200–212 (TKVLKGKKLSLPA) are Cytoplasmic-facing. The important for recycling of cargo proteins with the sequence motif K-D-E-L from the Golgi to the endoplasmic reticulum stretch occupies residues 204–207 (KGKK).

The protein belongs to the ERD2 family.

The protein localises to the endoplasmic reticulum membrane. It is found in the golgi apparatus membrane. It localises to the cytoplasmic vesicle. The protein resides in the COPI-coated vesicle membrane. Functionally, membrane receptor that binds the K-D-E-L sequence motif in the C-terminal part of endoplasmic reticulum resident proteins and maintains their localization in that compartment by participating to their vesicle-mediated recycling back from the Golgi. Binding is pH dependent, and is optimal at pH 5-5.4. In Homo sapiens (Human), this protein is ER lumen protein-retaining receptor 2 (KDELR2).